Reading from the N-terminus, the 383-residue chain is 3-phytase (383 aa).

An N-terminal signal peptide occupies residues 1 to 26 (MNHSKTLLLTAAAGLMLTCGAVSSQA). The propeptide occupies 27–30 (KHKL). The region spanning 31–362 (SDPYHFTVNA…VPWERIADKI (332 aa)) is the BPP domain. Residues 364 to 383 (FHPQVNKQVDPRKMTDRSGK) are disordered. The span at 372–383 (VDPRKMTDRSGK) shows a compositional bias: basic and acidic residues.

The protein localises to the secreted. The enzyme catalyses 1D-myo-inositol hexakisphosphate + H2O = 1D-myo-inositol 1,2,4,5,6-pentakisphosphate + phosphate. The polypeptide is 3-phytase (phy) (Bacillus sp. (strain DS11)).